The sequence spans 180 residues: Small ribosomal subunit protein eS10y (180 aa).

The interval Leu92 to Pro180 is disordered. Residues Asp108–Tyr128 show a composition bias toward basic and acidic residues. Gly residues predominate over residues Phe152–Pro180.

Belongs to the eukaryotic ribosomal protein eS10 family.

The protein resides in the cytoplasm. This is Small ribosomal subunit protein eS10y (RPS10B) from Arabidopsis thaliana (Mouse-ear cress).